Reading from the N-terminus, the 287-residue chain is Shikimate dehydrogenase (NADP(+)) (287 aa).

Shikimate-binding positions include 21–23 and Thr68; that span reads SKS. Lys72 (proton acceptor) is an active-site residue. Shikimate contacts are provided by Asn93 and Asp109. NADP(+)-binding positions include 133–137, 157–162, and Met226; these read GAGGA and NRTQTK. Residue Tyr228 participates in shikimate binding. NADP(+) is bound at residue Gly250.

It belongs to the shikimate dehydrogenase family. Homodimer.

It catalyses the reaction shikimate + NADP(+) = 3-dehydroshikimate + NADPH + H(+). Its pathway is metabolic intermediate biosynthesis; chorismate biosynthesis; chorismate from D-erythrose 4-phosphate and phosphoenolpyruvate: step 4/7. Involved in the biosynthesis of the chorismate, which leads to the biosynthesis of aromatic amino acids. Catalyzes the reversible NADPH linked reduction of 3-dehydroshikimate (DHSA) to yield shikimate (SA). This is Shikimate dehydrogenase (NADP(+)) from Shewanella oneidensis (strain ATCC 700550 / JCM 31522 / CIP 106686 / LMG 19005 / NCIMB 14063 / MR-1).